A 100-amino-acid polypeptide reads, in one-letter code: Small ribosomal subunit protein uS14c (100 aa).

Belongs to the universal ribosomal protein uS14 family. Part of the 30S ribosomal subunit.

It localises to the plastid. It is found in the chloroplast. Functionally, binds 16S rRNA, required for the assembly of 30S particles. This Psilotum nudum (Whisk fern) protein is Small ribosomal subunit protein uS14c.